The following is a 602-amino-acid chain: Carbon catabolite repressor protein 4 homolog 1 (602 aa).

The segment at 113–136 (ASAATEGNDEEELPRLNSSGSGSG) is disordered. Glutamate 299 is a Mg(2+) binding site.

This sequence belongs to the CCR4/nocturin family. As to quaternary structure, component of the CCR4-NOT complex, at least composed of CRR4 and CAF1 proteins. It depends on Mg(2+) as a cofactor.

The protein resides in the nucleus. It is found in the cytoplasm. The catalysed reaction is Exonucleolytic cleavage of poly(A) to 5'-AMP.. Its function is as follows. Acts as a catalytic component of the CCR4-NOT core complex, which in the nucleus seems to be a general transcription factor, and in the cytoplasm the major mRNA deadenylase involved in mRNA turnover. In Arabidopsis thaliana (Mouse-ear cress), this protein is Carbon catabolite repressor protein 4 homolog 1 (CCR4-1).